The sequence spans 327 residues: Transcription factor bHLH48 (327 aa).

Residues 137–179 (EPAETDSMVENQNQSYSSGKRKEREKKVKSSTKKNKSSVESDK) form a disordered region. In terms of domain architecture, bHLH spans 191–241 (QATDNHSLAERARREKINARMKLLQELVPGCDKIQGTALVLDEIINHVQTL).

Homodimer. As to expression, expressed in leaves, stems, and flowers.

The protein localises to the nucleus. The sequence is that of Transcription factor bHLH48 (BHLH48) from Arabidopsis thaliana (Mouse-ear cress).